Reading from the N-terminus, the 750-residue chain is MSQWYELQQLDSKFLEQVHQLYDDSFPMEIRQYLAQWLEKQDWEHAANDVSFATIRFHDLLSQLDDQYSRFSLENNFLLQHNIRKSKRNLQDNFQEDPIQMSMIIYSCLKEERKILENAQRFNQAQSGNIQSTVMLDKQKELDSKVRNVKDKVMCIEHEIKSLEDLQDEYDFKCKTLQNREHETNGVAKSDQKQEQLLLKKMYLMLDNKRKEVVHKIIELLNVTELTQNALINDELVEWKRRQQSACIGGPPNACLDQLQNWFTIVAESLQQVRQQLKKLEELEQKYTYEHDPITKNKQVLWDRTFSLFQQLIQSSFVVERQPCMPTHPQRPLVLKTGVQFTVKLRLLVKLQELNYNLKVKVLFDKDVNERNTVKGFRKFNILGTHTKVMNMEESTNGSLAAEFRHLQLKEQKNAGTRTNEGPLIVTEELHSLSFETQLCQPGLVIDLETTSLPVVVISNVSQLPSGWASILWYNMLVAEPRNLSFFLTPPCARWAQLSEVLSWQFSSVTKRGLNVDQLNMLGEKLLGPNASPDGLIPWTRFCKENINDKNFPFWLWIESILELIKKHLLPLWNDGCIMGFISKERERALLKDQQPGTFLLRFSESSREGAITFTWVERSQNGGEPDFHAVEPYTKKELSAVTFPDIIRNYKVMAAENIPENPLKYLYPNIDKDHAFGKYYSRPKEAPEPMELDGPKGTGYIKTELISVSEVHPSRLQTTDNLLPMSPEEFDEVSRIVGSVEFDSMMNTV.

At Ser-2 the chain carries N-acetylserine. Lys-114, Lys-175, Lys-296, Lys-366, Lys-525, and Lys-637 each carry N6-methyllysine. A coiled-coil region spans residues 136-317; that stretch reads LDKQKELDSK…LFQQLIQSSF (182 aa). The region spanning 573–670 is the SH2 domain; it reads WNDGCIMGFI…ENPLKYLYPN (98 aa). Glu-657 carries the post-translational modification ADP-ribosyl glutamic acid; by PARP14. Lys-665 bears the N6-methyllysine mark. Tyr-701 carries the post-translational modification Phosphotyrosine; by JAK1, JAK2 or TYK2. Lys-703 participates in a covalent cross-link: Glycyl lysine isopeptide (Lys-Gly) (interchain with G-Cter in SUMO1); alternate. Lys-703 participates in a covalent cross-link: Glycyl lysine isopeptide (Lys-Gly) (interchain with G-Cter in SUMO2); alternate. Glu-705 bears the ADP-ribosyl glutamic acid; by PARP14 mark. Ser-708 bears the Phosphoserine; by IKKE mark. At Ser-727 the chain carries Phosphoserine; by CAMK2 and MAPK14. Ser-745 carries the phosphoserine; by IKKE modification. Phosphothreonine; by IKKB is present on Thr-749.

It belongs to the transcription factor STAT family. Isoform alpha homodimerizes upon IFN-gamma induced phosphorylation. Heterodimer with STAT2 upon IFN-alpha/beta induced phosphorylation. The heterodimer STAT1:STAT2 forms the interferon-stimulated gene factor 3 complex (ISGF3) with IRF9. Interacts (phosphorylated at Ser-727) with PIAS1; the interaction results in release of STAT1 from its target gene. Interacts with IFNAR1; the interaction requires the phosphorylation of IFNAR1 at 'Tyr-466'. Interacts with IFNAR2. Found in a complex with NMI and CREBBP/CBP. Interacts with NMI which is required for CREBBP/CBP recruitment to the complex. Interacts with PTK2/FAK1. Interacts with SRC. Interacts with ERBB4 (phosphorylated). Interacts with PARP9 and DTX3L independently of IFN-beta or IFN-gamma-mediated STAT1 'Tyr-701' phosphorylation. Interacts with histone acetyltransferase EP300/p300 in response to INF-gamma stimulation. Independently of its phosphorylation status, interacts with OTOP1. Interacts with IFNGR1. Interacts with STAT4. As to quaternary structure, (Microbial infection) Interacts with Sendai virus C', C, Y1 and Y2 proteins, preventing activation of ISRE and GAS promoter. In terms of assembly, (Microbial infection) Interacts with Nipah virus P, V and W proteins preventing activation of ISRE and GAS promoter. (Microbial infection) Interacts with Rabies virus phosphoprotein preventing activation of ISRE and GAS promoter. As to quaternary structure, (Microbial infection) Interacts with HCV core protein; the interaction results in STAT1 degradation. In terms of assembly, (Microbial infection) Interacts with ebolavirus protein VP24. (Microbial infection) Interacts with Epstein-Barr virus (EBV) tegument protein BGLF2; this interaction leads to STAT1 dephosphorylation and inhibition. As to quaternary structure, (Microbial infection) Interacts (via N-terminus) with measles V protein; this interaction inhibits STAT1 phosphorylation by Jak1 and thereby the type I interferon signaling pathway. Deubiquitinated by USP13; leading to STAT1 stabilization and positive regulation of type I and type II IFN signalings. Post-translationally, phosphorylated on tyrosine and serine residues in response to a variety of cytokines/growth hormones including IFN-alpha, IFN-gamma, PDGF and EGF. Activated KIT promotes phosphorylation on tyrosine residues and subsequent translocation to the nucleus. Upon EGF stimulation, phosphorylation on Tyr-701 (lacking in beta form) by JAK1, JAK2 or TYK2 promotes dimerization and subsequent translocation to the nucleus. Growth hormone (GH) activates STAT1 signaling only via JAK2. Tyrosine phosphorylated in response to constitutively activated FGFR1, FGFR2, FGFR3 and FGFR4. Phosphorylation on Ser-727 by several kinases including MAPK14, ERK1/2, CAMK2/CAMKII and CK2 in response to IFN-gamma stimulation, is required for maximal transcriptional activity. Phosphorylated on Ser-727 by CAMK2/CAMKII in response to IFN-gamma stimulation and calcium mobilization, promoting activity. Phosphorylated by CAMK2/CAMKII in response to IFN-beta stimulation and calcium mobilization in epithelial cells, promoting activity. Phosphorylation on Ser-727 promotes sumoylation though increasing interaction with PIAS. Phosphorylation on Ser-727 by PRKCD induces apoptosis in response to DNA-damaging agents. Phosphorylated on tyrosine residues when PTK2/FAK1 is activated; most likely this is catalyzed by a SRC family kinase. Dephosphorylation on tyrosine residues by PTPN2 negatively regulates interferon-mediated signaling. Upon viral infection or IFN induction, phosphorylation on Ser-708 occurs much later than phosphorylation on Tyr-701 and is required for the binding of ISGF3 on the ISREs of a subset of IFN-stimulated genes IKBKE-dependent. Phosphorylation at Tyr-701 and Ser-708 are mutually exclusive, phosphorylation at Ser-708 requires previous dephosphorylation of Tyr-701. Phosphorylation at Thr-749 by IKBKB/IKKB promotes transcriptional activation of ARID5A and IL12B by STAT1. Phosphorylation at Thr-749 restricts interferon signaling and anti-inflammatory responses and promotes innate inflammatory responses. In terms of processing, sumoylated with SUMO1, SUMO2 and SUMO3. Sumoylation is enhanced by IFN-gamma-induced phosphorylation on Ser-727, and by interaction with PIAS proteins. Enhances the transactivation activity. ISGylated. Post-translationally, mono-ADP-ribosylated at Glu-657 and Glu-705 by PARP14; ADP-ribosylation prevents phosphorylation at Tyr-701. However, the role of ADP-ribosylation in the prevention of phosphorylation has been called into question and the lack of phosphorylation may be due to sumoylation of Lys-703. In terms of processing, monomethylated at Lys-525 by SETD2; monomethylation is necessary for phosphorylation at Tyr-701, translocation into the nucleus and activation of the antiviral defense. (Microbial infection) Ubiquitinated by Herpes simplex virus 2 E3 ubiquitin ligase ICP22.

Its subcellular location is the cytoplasm. The protein localises to the nucleus. In terms of biological role, signal transducer and transcription activator that mediates cellular responses to interferons (IFNs), cytokine KITLG/SCF and other cytokines and other growth factors. Following type I IFN (IFN-alpha and IFN-beta) binding to cell surface receptors, signaling via protein kinases leads to activation of Jak kinases (TYK2 and JAK1) and to tyrosine phosphorylation of STAT1 and STAT2. The phosphorylated STATs dimerize and associate with ISGF3G/IRF-9 to form a complex termed ISGF3 transcription factor, that enters the nucleus. ISGF3 binds to the IFN stimulated response element (ISRE) to activate the transcription of IFN-stimulated genes (ISG), which drive the cell in an antiviral state. In response to type II IFN (IFN-gamma), STAT1 is tyrosine- and serine-phosphorylated. It then forms a homodimer termed IFN-gamma-activated factor (GAF), migrates into the nucleus and binds to the IFN gamma activated sequence (GAS) to drive the expression of the target genes, inducing a cellular antiviral state. Becomes activated in response to KITLG/SCF and KIT signaling. May mediate cellular responses to activated FGFR1, FGFR2, FGFR3 and FGFR4. Following bacterial lipopolysaccharide (LPS)-induced TLR4 endocytosis, phosphorylated at Thr-749 by IKBKB which promotes binding of STAT1 to the 5'-TTTGAGGC-3' sequence in the ARID5A promoter, resulting in transcriptional activation of ARID5A and subsequent ARID5A-mediated stabilization of IL6. Phosphorylation at Thr-749 also promotes binding of STAT1 to the 5'-TTTGAGTC-3' sequence in the IL12B promoter and activation of IL12B transcription. Involved in food tolerance in small intestine: associates with the Gasdermin-D, p13 cleavage product (13 kDa GSDMD) and promotes transcription of CIITA, inducing type 1 regulatory T (Tr1) cells in upper small intestine. The chain is Signal transducer and activator of transcription 1-alpha/beta (STAT1) from Homo sapiens (Human).